The primary structure comprises 274 residues: 2,3,4,5-tetrahydropyridine-2,6-dicarboxylate N-succinyltransferase (274 aa).

Positions 103 and 140 each coordinate substrate.

This sequence belongs to the transferase hexapeptide repeat family. In terms of assembly, homotrimer.

It localises to the cytoplasm. It carries out the reaction (S)-2,3,4,5-tetrahydrodipicolinate + succinyl-CoA + H2O = (S)-2-succinylamino-6-oxoheptanedioate + CoA. It functions in the pathway amino-acid biosynthesis; L-lysine biosynthesis via DAP pathway; LL-2,6-diaminopimelate from (S)-tetrahydrodipicolinate (succinylase route): step 1/3. The polypeptide is 2,3,4,5-tetrahydropyridine-2,6-dicarboxylate N-succinyltransferase (Pasteurella multocida (strain Pm70)).